A 295-amino-acid polypeptide reads, in one-letter code: tRNA-cytidine(32) 2-sulfurtransferase (295 aa).

The short motif at 63–68 (SGGKDS) is the PP-loop motif element. C138, C141, and C229 together coordinate [4Fe-4S] cluster.

It belongs to the TtcA family. In terms of assembly, homodimer. Requires Mg(2+) as cofactor. The cofactor is [4Fe-4S] cluster.

It is found in the cytoplasm. It catalyses the reaction cytidine(32) in tRNA + S-sulfanyl-L-cysteinyl-[cysteine desulfurase] + AH2 + ATP = 2-thiocytidine(32) in tRNA + L-cysteinyl-[cysteine desulfurase] + A + AMP + diphosphate + H(+). It participates in tRNA modification. Catalyzes the ATP-dependent 2-thiolation of cytidine in position 32 of tRNA, to form 2-thiocytidine (s(2)C32). The sulfur atoms are provided by the cysteine/cysteine desulfurase (IscS) system. This is tRNA-cytidine(32) 2-sulfurtransferase from Hyphomonas neptunium (strain ATCC 15444).